The chain runs to 246 residues: MAGHSKWANTRHRKAAQDAKRGKIFTKIIRELVTAAKLGGGDPDANPRLRAAVDKALANNMTRDTLNRAIARGVGGDEDSNMETIIYEGYGPGGTAIMIECLSDNRNRTVAEVRHAFSKCGGNLGTDGSVAYLFSKKGVISFEKGDEDTIMEAALEAGAEDVVTYDDGAIDVYTAWEEMGKVRDALEEAGLKADSAEVSMIPSTKADMDAETAPKLLRLIDMLEDCDDVQEVYHNGEISDEVAATL.

The segment at 1–20 (MAGHSKWANTRHRKAAQDAK) is disordered.

The protein belongs to the TACO1 family.

It localises to the cytoplasm. This chain is Probable transcriptional regulatory protein YebC, found in Salmonella choleraesuis (strain SC-B67).